Reading from the N-terminus, the 584-residue chain is Aspartate--tRNA(Asp/Asn) ligase (584 aa).

Position 173 (Glu173) interacts with L-aspartate. The tract at residues 197 to 200 is aspartate; it reads QLFK. Arg219 contributes to the L-aspartate binding site. ATP-binding positions include 219 to 221 and Gln228; that span reads RDE. Position 447 (His447) interacts with L-aspartate. An ATP-binding site is contributed by Glu477. Arg484 provides a ligand contact to L-aspartate. 529–532 provides a ligand contact to ATP; the sequence is GFDR.

The protein belongs to the class-II aminoacyl-tRNA synthetase family. Type 1 subfamily. Homodimer.

The protein localises to the cytoplasm. It carries out the reaction tRNA(Asx) + L-aspartate + ATP = L-aspartyl-tRNA(Asx) + AMP + diphosphate. Its function is as follows. Aspartyl-tRNA synthetase with relaxed tRNA specificity since it is able to aspartylate not only its cognate tRNA(Asp) but also tRNA(Asn). Reaction proceeds in two steps: L-aspartate is first activated by ATP to form Asp-AMP and then transferred to the acceptor end of tRNA(Asp/Asn). The protein is Aspartate--tRNA(Asp/Asn) ligase of Campylobacter hominis (strain ATCC BAA-381 / DSM 21671 / CCUG 45161 / LMG 19568 / NCTC 13146 / CH001A).